The chain runs to 475 residues: Glycogen synthase (475 aa).

K15 is an ADP-alpha-D-glucose binding site.

The protein belongs to the glycosyltransferase 1 family. Bacterial/plant glycogen synthase subfamily.

It carries out the reaction [(1-&gt;4)-alpha-D-glucosyl](n) + ADP-alpha-D-glucose = [(1-&gt;4)-alpha-D-glucosyl](n+1) + ADP + H(+). It functions in the pathway glycan biosynthesis; glycogen biosynthesis. Its function is as follows. Synthesizes alpha-1,4-glucan chains using ADP-glucose. This Chlamydia abortus (strain DSM 27085 / S26/3) (Chlamydophila abortus) protein is Glycogen synthase.